Reading from the N-terminus, the 126-residue chain is Fluoride-specific ion channel FluC (126 aa).

Helical transmembrane passes span 2–22 (LITV…RYLI), 37–57 (VGVL…VVLA), 65–85 (LSPF…AFSL), and 99–119 (AALY…LGMM). Residues Gly75 and Thr78 each contribute to the Na(+) site.

It belongs to the fluoride channel Fluc/FEX (TC 1.A.43) family.

It localises to the cell inner membrane. It catalyses the reaction fluoride(in) = fluoride(out). Na(+) is not transported, but it plays an essential structural role and its presence is essential for fluoride channel function. Fluoride-specific ion channel. Important for reducing fluoride concentration in the cell, thus reducing its toxicity. The protein is Fluoride-specific ion channel FluC of Ruegeria sp. (strain TM1040) (Silicibacter sp.).